The sequence spans 430 residues: Dihydroorotase (430 aa).

Zn(2+) is bound by residues His-57 and His-59. Residues 59–61 (HLR) and Asn-91 each bind substrate. The Zn(2+) site is built by Asp-151, His-178, and His-231. Position 277 (Asn-277) interacts with substrate. Zn(2+) is bound at residue Asp-304. Asp-304 is a catalytic residue. Substrate is bound by residues His-308 and 322–323 (PG).

It belongs to the metallo-dependent hydrolases superfamily. DHOase family. Class I DHOase subfamily. Requires Zn(2+) as cofactor.

It carries out the reaction (S)-dihydroorotate + H2O = N-carbamoyl-L-aspartate + H(+). It functions in the pathway pyrimidine metabolism; UMP biosynthesis via de novo pathway; (S)-dihydroorotate from bicarbonate: step 3/3. Functionally, catalyzes the reversible cyclization of carbamoyl aspartate to dihydroorotate. The chain is Dihydroorotase from Mycobacterium tuberculosis (strain ATCC 25618 / H37Rv).